We begin with the raw amino-acid sequence, 162 residues long: D-aminoacyl-tRNA deacylase (162 aa).

The Gly-cisPro motif, important for rejection of L-amino acids motif lies at 143 to 144; it reads GP.

It belongs to the DTD family. Homodimer.

It is found in the cytoplasm. The enzyme catalyses glycyl-tRNA(Ala) + H2O = tRNA(Ala) + glycine + H(+). The catalysed reaction is a D-aminoacyl-tRNA + H2O = a tRNA + a D-alpha-amino acid + H(+). Its function is as follows. An aminoacyl-tRNA editing enzyme that deacylates mischarged D-aminoacyl-tRNAs. Also deacylates mischarged glycyl-tRNA(Ala), protecting cells against glycine mischarging by AlaRS. Acts via tRNA-based rather than protein-based catalysis; rejects L-amino acids rather than detecting D-amino acids in the active site. By recycling D-aminoacyl-tRNA to D-amino acids and free tRNA molecules, this enzyme counteracts the toxicity associated with the formation of D-aminoacyl-tRNA entities in vivo and helps enforce protein L-homochirality. This chain is D-aminoacyl-tRNA deacylase, found in Nitratidesulfovibrio vulgaris (strain ATCC 29579 / DSM 644 / CCUG 34227 / NCIMB 8303 / VKM B-1760 / Hildenborough) (Desulfovibrio vulgaris).